The primary structure comprises 330 residues: Ketol-acid reductoisomerase (NADP(+)) (330 aa).

Residues 2-182 (VKIFYDKDVT…GLTKVGVIQT (181 aa)) enclose the KARI N-terminal Rossmann domain. Residues 25–28 (YGSQ), Arg48, Ser53, and 83–86 (DEVQ) contribute to the NADP(+) site. His108 is a catalytic residue. Position 134 (Gly134) interacts with NADP(+). One can recognise a KARI C-terminal knotted domain in the interval 183-328 (TFREETETDL…KELRKMCGLE (146 aa)). 4 residues coordinate Mg(2+): Asp191, Glu195, Glu227, and Glu231. Ser252 contacts substrate.

Belongs to the ketol-acid reductoisomerase family. Mg(2+) is required as a cofactor.

It catalyses the reaction (2R)-2,3-dihydroxy-3-methylbutanoate + NADP(+) = (2S)-2-acetolactate + NADPH + H(+). The catalysed reaction is (2R,3R)-2,3-dihydroxy-3-methylpentanoate + NADP(+) = (S)-2-ethyl-2-hydroxy-3-oxobutanoate + NADPH + H(+). It functions in the pathway amino-acid biosynthesis; L-isoleucine biosynthesis; L-isoleucine from 2-oxobutanoate: step 2/4. Its pathway is amino-acid biosynthesis; L-valine biosynthesis; L-valine from pyruvate: step 2/4. Involved in the biosynthesis of branched-chain amino acids (BCAA). Catalyzes an alkyl-migration followed by a ketol-acid reduction of (S)-2-acetolactate (S2AL) to yield (R)-2,3-dihydroxy-isovalerate. In the isomerase reaction, S2AL is rearranged via a Mg-dependent methyl migration to produce 3-hydroxy-3-methyl-2-ketobutyrate (HMKB). In the reductase reaction, this 2-ketoacid undergoes a metal-dependent reduction by NADPH to yield (R)-2,3-dihydroxy-isovalerate. The sequence is that of Ketol-acid reductoisomerase (NADP(+)) from Methanocaldococcus jannaschii (strain ATCC 43067 / DSM 2661 / JAL-1 / JCM 10045 / NBRC 100440) (Methanococcus jannaschii).